The chain runs to 429 residues: Serine hydroxymethyltransferase (429 aa).

(6S)-5,6,7,8-tetrahydrofolate-binding positions include Leu-130 and 134–136 (GHL). An N6-(pyridoxal phosphate)lysine modification is found at Lys-239.

Belongs to the SHMT family. As to quaternary structure, homodimer. Pyridoxal 5'-phosphate is required as a cofactor.

The protein localises to the cytoplasm. The enzyme catalyses (6R)-5,10-methylene-5,6,7,8-tetrahydrofolate + glycine + H2O = (6S)-5,6,7,8-tetrahydrofolate + L-serine. It participates in one-carbon metabolism; tetrahydrofolate interconversion. The protein operates within amino-acid biosynthesis; glycine biosynthesis; glycine from L-serine: step 1/1. Its function is as follows. Catalyzes the reversible interconversion of serine and glycine with tetrahydrofolate (THF) serving as the one-carbon carrier. This reaction serves as the major source of one-carbon groups required for the biosynthesis of purines, thymidylate, methionine, and other important biomolecules. Also exhibits THF-independent aldolase activity toward beta-hydroxyamino acids, producing glycine and aldehydes, via a retro-aldol mechanism. In Phenylobacterium zucineum (strain HLK1), this protein is Serine hydroxymethyltransferase.